Consider the following 472-residue polypeptide: Ribulose bisphosphate carboxylase large chain 1 (472 aa).

Asn-115 and Thr-165 together coordinate substrate. The active-site Proton acceptor is Lys-167. Lys-169 contacts substrate. The Mg(2+) site is built by Lys-193, Asp-195, and Glu-196. Lys-193 carries the N6-carboxylysine modification. The Proton acceptor role is filled by His-286. The substrate site is built by Arg-287, His-319, and Ser-371.

Belongs to the RuBisCO large chain family. Type I subfamily. As to quaternary structure, heterohexadecamer of 8 large chains and 8 small chains. Mg(2+) is required as a cofactor.

The catalysed reaction is 2 (2R)-3-phosphoglycerate + 2 H(+) = D-ribulose 1,5-bisphosphate + CO2 + H2O. It carries out the reaction D-ribulose 1,5-bisphosphate + O2 = 2-phosphoglycolate + (2R)-3-phosphoglycerate + 2 H(+). In terms of biological role, ruBisCO catalyzes two reactions: the carboxylation of D-ribulose 1,5-bisphosphate, the primary event in carbon dioxide fixation, as well as the oxidative fragmentation of the pentose substrate. Both reactions occur simultaneously and in competition at the same active site. The polypeptide is Ribulose bisphosphate carboxylase large chain 1 (Allochromatium vinosum (strain ATCC 17899 / DSM 180 / NBRC 103801 / NCIMB 10441 / D) (Chromatium vinosum)).